The primary structure comprises 698 residues: D-(-)-3-hydroxybutyrate oligomer hydrolase (698 aa).

The signal sequence occupies residues 1–32 (MTTIRGGSRRASLPALALLGVLLGACHSDDNA). Serine 310 serves as the catalytic Charge relay system.

The protein belongs to the D-(-)-3-hydroxybutyrate oligomer hydrolase family.

The protein localises to the secreted. The enzyme catalyses (3R)-hydroxybutanoate dimer + H2O = 2 (R)-3-hydroxybutanoate + H(+). The protein operates within lipid metabolism; butanoate metabolism. Its function is as follows. Participates in the degradation of poly-3-hydroxybutyrate (PHB). It works downstream of poly(3-hydroxybutyrate) depolymerase, hydrolyzing D(-)-3-hydroxybutyrate oligomers of various length (3HB-oligomers) into 3HB-monomers. The polypeptide is D-(-)-3-hydroxybutyrate oligomer hydrolase (Burkholderia thailandensis (strain ATCC 700388 / DSM 13276 / CCUG 48851 / CIP 106301 / E264)).